Consider the following 229-residue polypeptide: Interleukin-27 subunit beta (229 aa).

The first 20 residues, 1 to 20, serve as a signal peptide directing secretion; the sequence is MTPQLLLALVLWASCPPCSG. 2 consecutive Fibronectin type-III domains span residues 24–130 and 131–227; these read PPAA…IKPD and PPEG…TMSL. Asparagine 55 and asparagine 105 each carry an N-linked (GlcNAc...) asparagine glycan.

It belongs to the type I cytokine receptor family. Type 3 subfamily. As to quaternary structure, heterodimer with IL27/IL27A; not disulfide-linked. This heterodimer is known as interleukin IL-27. Heterodimer with IL12A; not disulfide-linked. This heterodimer is known as interleukin IL-35. Interacts with SQSTM1.

Its subcellular location is the secreted. Associates with IL27 to form the IL-27 interleukin, a heterodimeric cytokine which functions in innate immunity. IL-27 has pro- and anti-inflammatory properties, that can regulate T-helper cell development, suppress T-cell proliferation, stimulate cytotoxic T-cell activity, induce isotype switching in B-cells, and that has diverse effects on innate immune cells. Among its target cells are CD4 T-helper cells which can differentiate in type 1 effector cells (TH1), type 2 effector cells (TH2) and IL17 producing helper T-cells (TH17). It drives rapid clonal expansion of naive but not memory CD4 T-cells. It also strongly synergizes with IL-12 to trigger interferon-gamma/IFN-gamma production of naive CD4 T-cells, binds to the cytokine receptor WSX-1/TCCR. Another important role of IL-27 is its antitumor activity as well as its antiangiogenic activity with activation of production of antiangiogenic chemokines. This chain is Interleukin-27 subunit beta (EBI3), found in Homo sapiens (Human).